Reading from the N-terminus, the 197-residue chain is Phosphoheptose isomerase (197 aa).

The 163-residue stretch at 34-196 (MVQCLLGGNK…DRTLFPQDEQ (163 aa)) folds into the SIS domain. 49–51 (NGG) contributes to the substrate binding site. The Zn(2+) site is built by His58 and Glu62. Substrate-binding positions include Glu62, 91–92 (ND), 117–119 (STS), Ser122, and Gln172. 2 residues coordinate Zn(2+): Gln172 and His180.

The protein belongs to the SIS family. GmhA subfamily. As to quaternary structure, homotetramer. The cofactor is Zn(2+).

Its subcellular location is the cytoplasm. The catalysed reaction is 2 D-sedoheptulose 7-phosphate = D-glycero-alpha-D-manno-heptose 7-phosphate + D-glycero-beta-D-manno-heptose 7-phosphate. It participates in carbohydrate biosynthesis; D-glycero-D-manno-heptose 7-phosphate biosynthesis; D-glycero-alpha-D-manno-heptose 7-phosphate and D-glycero-beta-D-manno-heptose 7-phosphate from sedoheptulose 7-phosphate: step 1/1. In terms of biological role, catalyzes the isomerization of sedoheptulose 7-phosphate in D-glycero-D-manno-heptose 7-phosphate. This is Phosphoheptose isomerase from Shewanella frigidimarina (strain NCIMB 400).